Here is a 130-residue protein sequence, read N- to C-terminus: Large ribosomal subunit protein eL32 (130 aa).

It belongs to the eukaryotic ribosomal protein eL32 family.

The sequence is that of Large ribosomal subunit protein eL32 (rpl32e) from Pyrococcus abyssi (strain GE5 / Orsay).